A 489-amino-acid polypeptide reads, in one-letter code: 2-(3-amino-3-carboxypropyl)histidine synthase subunit 2 (489 aa).

The residue at position 1 (methionine 1) is an N-acetylmethionine. Phosphoserine is present on serine 7. Residues cysteine 89, cysteine 110, and cysteine 341 each coordinate [4Fe-4S] cluster. At serine 446 the chain carries Phosphoserine. Threonine 467 is modified (phosphothreonine). Serine 488 carries the post-translational modification Phosphoserine.

This sequence belongs to the DPH1/DPH2 family. DPH2 subfamily. In terms of assembly, component of the 2-(3-amino-3-carboxypropyl)histidine synthase complex composed of DPH1, DPH2, DPH3 and a NADH-dependent reductase. Interacts with DPH1. Requires [4Fe-4S] cluster as cofactor.

It functions in the pathway protein modification; peptidyl-diphthamide biosynthesis. In terms of biological role, required for the first step of diphthamide biosynthesis, a post-translational modification of histidine which occurs in elongation factor 2. DPH1 and DPH2 transfer a 3-amino-3-carboxypropyl (ACP) group from S-adenosyl-L-methionine (SAM) to a histidine residue, the reaction is assisted by a reduction system comprising DPH3 and a NADH-dependent reductase. Facilitates the reduction of the catalytic iron-sulfur cluster found in the DPH1 subunit. This is 2-(3-amino-3-carboxypropyl)histidine synthase subunit 2 (Dph2) from Mus musculus (Mouse).